The chain runs to 716 residues: Phosphoribosylformylglycinamidine synthase subunit PurL (716 aa).

Residue His-34 is part of the active site. Tyr-37 lines the ATP pocket. Glu-78 serves as a coordination point for Mg(2+). Residues 79-82 (SHNH) and Arg-101 contribute to the substrate site. Residue His-80 is the Proton acceptor of the active site. Mg(2+) is bound at residue Asp-102. Substrate is bound at residue Gln-226. A Mg(2+)-binding site is contributed by Asp-254. 298 to 300 (ESQ) is a binding site for substrate. Asp-474 and Gly-511 together coordinate ATP. Asn-512 provides a ligand contact to Mg(2+). Ser-514 contributes to the substrate binding site.

This sequence belongs to the FGAMS family. Monomer. Part of the FGAM synthase complex composed of 1 PurL, 1 PurQ and 2 PurS subunits.

The protein resides in the cytoplasm. It catalyses the reaction N(2)-formyl-N(1)-(5-phospho-beta-D-ribosyl)glycinamide + L-glutamine + ATP + H2O = 2-formamido-N(1)-(5-O-phospho-beta-D-ribosyl)acetamidine + L-glutamate + ADP + phosphate + H(+). The protein operates within purine metabolism; IMP biosynthesis via de novo pathway; 5-amino-1-(5-phospho-D-ribosyl)imidazole from N(2)-formyl-N(1)-(5-phospho-D-ribosyl)glycinamide: step 1/2. Functionally, part of the phosphoribosylformylglycinamidine synthase complex involved in the purines biosynthetic pathway. Catalyzes the ATP-dependent conversion of formylglycinamide ribonucleotide (FGAR) and glutamine to yield formylglycinamidine ribonucleotide (FGAM) and glutamate. The FGAM synthase complex is composed of three subunits. PurQ produces an ammonia molecule by converting glutamine to glutamate. PurL transfers the ammonia molecule to FGAR to form FGAM in an ATP-dependent manner. PurS interacts with PurQ and PurL and is thought to assist in the transfer of the ammonia molecule from PurQ to PurL. This Methanobrevibacter smithii (strain ATCC 35061 / DSM 861 / OCM 144 / PS) protein is Phosphoribosylformylglycinamidine synthase subunit PurL.